Consider the following 113-residue polypeptide: UPF0251 protein Teth514_1147 (113 aa).

This sequence belongs to the UPF0251 family.

In Thermoanaerobacter sp. (strain X514), this protein is UPF0251 protein Teth514_1147.